The sequence spans 546 residues: Chaperonin GroEL (546 aa).

Residues 30–33 (TLGP), K51, 87–91 (DGTTT), G415, and D497 contribute to the ATP site. Residues 527-546 (PKKDSPAPAMPGGGMGGMDF) are disordered. The span at 537 to 546 (PGGGMGGMDF) shows a compositional bias: gly residues.

This sequence belongs to the chaperonin (HSP60) family. Forms a cylinder of 14 subunits composed of two heptameric rings stacked back-to-back. Interacts with the co-chaperonin GroES.

The protein resides in the cytoplasm. The catalysed reaction is ATP + H2O + a folded polypeptide = ADP + phosphate + an unfolded polypeptide.. In terms of biological role, together with its co-chaperonin GroES, plays an essential role in assisting protein folding. The GroEL-GroES system forms a nano-cage that allows encapsulation of the non-native substrate proteins and provides a physical environment optimized to promote and accelerate protein folding. In Methylorubrum populi (strain ATCC BAA-705 / NCIMB 13946 / BJ001) (Methylobacterium populi), this protein is Chaperonin GroEL.